The following is a 140-amino-acid chain: L-fucose mutarotase (140 aa).

His-22 functions as the Proton donor in the catalytic mechanism. Substrate-binding positions include Asp-30, Arg-107, and Tyr-129–Asn-131.

Belongs to the RbsD / FucU family. FucU mutarotase subfamily. Homodecamer.

It is found in the cytoplasm. The catalysed reaction is alpha-L-fucose = beta-L-fucose. The protein operates within carbohydrate metabolism; L-fucose metabolism. Its function is as follows. Involved in the anomeric conversion of L-fucose. The chain is L-fucose mutarotase from Klebsiella pneumoniae subsp. pneumoniae (strain ATCC 700721 / MGH 78578).